Here is a 634-residue protein sequence, read N- to C-terminus: Chaperone protein HtpG (634 aa).

Residues 1–342 are a; substrate-binding; the sequence is MSVETQKETL…SNDLSLNVSR (342 aa). The segment at 343-559 is b; that stretch reads EILQKDPVID…EQDLGLQMRQ (217 aa). The tract at residues 560–634 is c; sequence ILEASGQKVP…LNKLLVELSA (75 aa).

The protein belongs to the heat shock protein 90 family. As to quaternary structure, homodimer.

Its subcellular location is the cytoplasm. Molecular chaperone. Has ATPase activity. The chain is Chaperone protein HtpG from Pseudomonas paraeruginosa (strain DSM 24068 / PA7) (Pseudomonas aeruginosa (strain PA7)).